Reading from the N-terminus, the 358-residue chain is Ribosomal RNA large subunit methyltransferase M (358 aa).

Residues Ser-183, 216-219, Asp-235, Asp-255, and Asp-271 contribute to the S-adenosyl-L-methionine site; that span reads APGG. Catalysis depends on Lys-300, which acts as the Proton acceptor.

It belongs to the class I-like SAM-binding methyltransferase superfamily. RNA methyltransferase RlmE family. RlmM subfamily. In terms of assembly, monomer.

It is found in the cytoplasm. The catalysed reaction is cytidine(2498) in 23S rRNA + S-adenosyl-L-methionine = 2'-O-methylcytidine(2498) in 23S rRNA + S-adenosyl-L-homocysteine + H(+). Catalyzes the 2'-O-methylation at nucleotide C2498 in 23S rRNA. The protein is Ribosomal RNA large subunit methyltransferase M of Pseudomonas fluorescens (strain SBW25).